The chain runs to 93 residues: Pyrimidine/purine nucleoside phosphorylase (93 aa).

It belongs to the nucleoside phosphorylase PpnP family.

It catalyses the reaction a purine D-ribonucleoside + phosphate = a purine nucleobase + alpha-D-ribose 1-phosphate. The enzyme catalyses adenosine + phosphate = alpha-D-ribose 1-phosphate + adenine. The catalysed reaction is cytidine + phosphate = cytosine + alpha-D-ribose 1-phosphate. It carries out the reaction guanosine + phosphate = alpha-D-ribose 1-phosphate + guanine. It catalyses the reaction inosine + phosphate = alpha-D-ribose 1-phosphate + hypoxanthine. The enzyme catalyses thymidine + phosphate = 2-deoxy-alpha-D-ribose 1-phosphate + thymine. The catalysed reaction is uridine + phosphate = alpha-D-ribose 1-phosphate + uracil. It carries out the reaction xanthosine + phosphate = alpha-D-ribose 1-phosphate + xanthine. Its function is as follows. Catalyzes the phosphorolysis of diverse nucleosides, yielding D-ribose 1-phosphate and the respective free bases. Can use uridine, adenosine, guanosine, cytidine, thymidine, inosine and xanthosine as substrates. Also catalyzes the reverse reactions. This is Pyrimidine/purine nucleoside phosphorylase from Pseudomonas aeruginosa (strain LESB58).